The primary structure comprises 449 residues: UDP-N-acetylmuramoylalanine--D-glutamate ligase (449 aa).

111–117 (GTNGKST) lines the ATP pocket.

The protein belongs to the MurCDEF family.

The protein localises to the cytoplasm. It carries out the reaction UDP-N-acetyl-alpha-D-muramoyl-L-alanine + D-glutamate + ATP = UDP-N-acetyl-alpha-D-muramoyl-L-alanyl-D-glutamate + ADP + phosphate + H(+). It participates in cell wall biogenesis; peptidoglycan biosynthesis. Functionally, cell wall formation. Catalyzes the addition of glutamate to the nucleotide precursor UDP-N-acetylmuramoyl-L-alanine (UMA). This Rickettsia felis (strain ATCC VR-1525 / URRWXCal2) (Rickettsia azadi) protein is UDP-N-acetylmuramoylalanine--D-glutamate ligase.